The chain runs to 529 residues: Protein PAT1 homolog 2 (529 aa).

A disordered region spans residues 153–183 (QILQQQQRWRRRRSPTARSVPAQKPWSREPA).

Belongs to the PAT1 family. In terms of assembly, interacts with LSM1.

Its subcellular location is the cytoplasm. The protein localises to the nucleus. RNA-binding protein that acts as a translational repressor. This Mus musculus (Mouse) protein is Protein PAT1 homolog 2 (Patl2).